We begin with the raw amino-acid sequence, 119 residues long: Ribonuclease P protein component (119 aa).

The protein belongs to the RnpA family. In terms of assembly, consists of a catalytic RNA component (M1 or rnpB) and a protein subunit.

It carries out the reaction Endonucleolytic cleavage of RNA, removing 5'-extranucleotides from tRNA precursor.. Functionally, RNaseP catalyzes the removal of the 5'-leader sequence from pre-tRNA to produce the mature 5'-terminus. It can also cleave other RNA substrates such as 4.5S RNA. The protein component plays an auxiliary but essential role in vivo by binding to the 5'-leader sequence and broadening the substrate specificity of the ribozyme. The chain is Ribonuclease P protein component from Escherichia fergusonii (strain ATCC 35469 / DSM 13698 / CCUG 18766 / IAM 14443 / JCM 21226 / LMG 7866 / NBRC 102419 / NCTC 12128 / CDC 0568-73).